A 119-amino-acid chain; its full sequence is NADH-quinone oxidoreductase subunit A (119 aa).

Transmembrane regions (helical) follow at residues 9–29 (VILFILVGVGVGVAPQVLGFL), 63–83 (LVAILFILFDLEIAFLFPWAV), and 88–108 (IGATGFWAMMIFLGILVVGFV).

Belongs to the complex I subunit 3 family. NDH-1 is composed of 14 different subunits. Subunits NuoA, H, J, K, L, M, N constitute the membrane sector of the complex.

The protein localises to the cell inner membrane. The enzyme catalyses a quinone + NADH + 5 H(+)(in) = a quinol + NAD(+) + 4 H(+)(out). Functionally, NDH-1 shuttles electrons from NADH, via FMN and iron-sulfur (Fe-S) centers, to quinones in the respiratory chain. The immediate electron acceptor for the enzyme in this species is believed to be ubiquinone. Couples the redox reaction to proton translocation (for every two electrons transferred, four hydrogen ions are translocated across the cytoplasmic membrane), and thus conserves the redox energy in a proton gradient. This is NADH-quinone oxidoreductase subunit A from Leptothrix cholodnii (strain ATCC 51168 / LMG 8142 / SP-6) (Leptothrix discophora (strain SP-6)).